Reading from the N-terminus, the 58-residue chain is uncharacterized protein (58 aa).

This is an uncharacterized protein from Sinorhizobium fredii (strain NBRC 101917 / NGR234).